Reading from the N-terminus, the 490-residue chain is Probable glycine dehydrogenase (decarboxylating) subunit 2 (490 aa).

K273 is modified (N6-(pyridoxal phosphate)lysine).

The protein belongs to the GcvP family. C-terminal subunit subfamily. As to quaternary structure, the glycine cleavage system is composed of four proteins: P, T, L and H. In this organism, the P 'protein' is a heterodimer of two subunits. Pyridoxal 5'-phosphate is required as a cofactor.

The catalysed reaction is N(6)-[(R)-lipoyl]-L-lysyl-[glycine-cleavage complex H protein] + glycine + H(+) = N(6)-[(R)-S(8)-aminomethyldihydrolipoyl]-L-lysyl-[glycine-cleavage complex H protein] + CO2. The glycine cleavage system catalyzes the degradation of glycine. The P protein binds the alpha-amino group of glycine through its pyridoxal phosphate cofactor; CO(2) is released and the remaining methylamine moiety is then transferred to the lipoamide cofactor of the H protein. In Staphylococcus aureus (strain Mu50 / ATCC 700699), this protein is Probable glycine dehydrogenase (decarboxylating) subunit 2.